A 502-amino-acid polypeptide reads, in one-letter code: UPF0371 protein CLL_A2797 (502 aa).

This sequence belongs to the UPF0371 family.

This is UPF0371 protein CLL_A2797 from Clostridium botulinum (strain Eklund 17B / Type B).